Consider the following 37-residue polypeptide: Large ribosomal subunit protein bL36 (37 aa).

Belongs to the bacterial ribosomal protein bL36 family.

The sequence is that of Large ribosomal subunit protein bL36 from Gloeothece citriformis (strain PCC 7424) (Cyanothece sp. (strain PCC 7424)).